The chain runs to 242 residues: 7-cyano-7-deazaguanine synthase (242 aa).

The tract at residues 1 to 22 (MNSSSNEKNKDLNRKNFSSKTD) is disordered. 32-42 (LSGGLDSTTCL) serves as a coordination point for ATP. Residues C212, C221, C224, and C227 each contribute to the Zn(2+) site.

It belongs to the QueC family. The cofactor is Zn(2+).

It carries out the reaction 7-carboxy-7-deazaguanine + NH4(+) + ATP = 7-cyano-7-deazaguanine + ADP + phosphate + H2O + H(+). It participates in purine metabolism; 7-cyano-7-deazaguanine biosynthesis. In terms of biological role, catalyzes the ATP-dependent conversion of 7-carboxy-7-deazaguanine (CDG) to 7-cyano-7-deazaguanine (preQ(0)). This Leptospira interrogans serogroup Icterohaemorrhagiae serovar copenhageni (strain Fiocruz L1-130) protein is 7-cyano-7-deazaguanine synthase.